We begin with the raw amino-acid sequence, 662 residues long: MEAITIEIIIIILTISYPILVAPQLLYNYPFNCKKGPKMTLDGLTCPLDFNTFNLDSKDNMEAGTMCRPNPLSKDIEDGFLCYKDTWVTTCEETWYFSKTVKNHIIHEHITKDECFEALATYKLGKHVEPFFPAPSCYWSATNEERATFVNIQPHGVLLDPYSGKIKDPLIDSDNCDNDFCVTRSHQTHWLRNRKPDIMERCNNETWECHPIKIYYGWVSKKKNQETSTTFNYVQTGLVIESQYIGHVLMADLCIMTFCNRDGYLFPDGSWWEIKYSLYHAFTKDHTVLNNAHKCGDRTHGDHLTEFQRDKKVGYEDLEINLEGLEMRQKSRSINMMCLNRLAEIRNTHHINVLDMSYLTPKHPGRGLAYYFSQDQKNSSKYHVKVLDCDYKLIHIHDADIKGFVNITKYPEPNVTILGLKDNLTFADLGISRCQDLTPLNGSRNISCEESSGPLHSDDSRLSNGKRFWTRHSFQGANFHEHPGVRIGVNGITYDIRKQILRFPSTSNLLWDLPSYYSTKHRVHFFQHPTKHEIRKNFTGSDSRDIDVLDDLINRHINRTDFPTRIRNWIGNIEDKVEHFFSNVGGTIKTIISLVLFVIGTLISIKVWKKCKRHPQKTKKVAQLKLNDYEKTYNQRDTSNNNNDDLYETIENGGTVYSPFHV.

The signal sequence occupies residues M1–S16. Over Y17–H579 the chain is Virion surface. Intrachain disulfides connect C46/C338, C82/C115, C91/C137, and C202/C259. The helical transmembrane segment at F580–I605 threads the bilayer. Topologically, residues K606–V662 are intravirion.

This sequence belongs to the vesiculovirus glycoprotein family. As to quaternary structure, homotrimer. In terms of processing, glycosylated by host.

Its subcellular location is the virion membrane. The protein resides in the host membrane. Its function is as follows. Attaches the virus to host receptors, inducing clathrin-dependent endocytosis of the virion. In the endosome, the acidic pH induces conformational changes in the glycoprotein trimer, which trigger fusion between virus and endosomal membrane. In Bos taurus (Bovine), this protein is Glycoprotein (G).